The sequence spans 121 residues: ATP synthase epsilon chain (121 aa).

Belongs to the ATPase epsilon chain family. F-type ATPases have 2 components, CF(1) - the catalytic core - and CF(0) - the membrane proton channel. CF(1) has five subunits: alpha(3), beta(3), gamma(1), delta(1), epsilon(1). CF(0) has three main subunits: a, b and c.

It localises to the cell membrane. Its function is as follows. Produces ATP from ADP in the presence of a proton gradient across the membrane. The polypeptide is ATP synthase epsilon chain (Mycolicibacterium vanbaalenii (strain DSM 7251 / JCM 13017 / BCRC 16820 / KCTC 9966 / NRRL B-24157 / PYR-1) (Mycobacterium vanbaalenii)).